Consider the following 882-residue polypeptide: Valine--tRNA ligase (882 aa).

Residues 45 to 55 (PNVTGSLHIGH) carry the 'HIGH' region motif. Positions 525 to 529 (KFSKS) match the 'KMSKS' region motif. Lys-528 is an ATP binding site. Residues 812-881 (EGLIDVAKEK…VLKKGIQNLA (70 aa)) adopt a coiled-coil conformation.

It belongs to the class-I aminoacyl-tRNA synthetase family. ValS type 1 subfamily. In terms of assembly, monomer.

The protein localises to the cytoplasm. It carries out the reaction tRNA(Val) + L-valine + ATP = L-valyl-tRNA(Val) + AMP + diphosphate. Catalyzes the attachment of valine to tRNA(Val). As ValRS can inadvertently accommodate and process structurally similar amino acids such as threonine, to avoid such errors, it has a 'posttransfer' editing activity that hydrolyzes mischarged Thr-tRNA(Val) in a tRNA-dependent manner. The protein is Valine--tRNA ligase of Leptospira interrogans serogroup Icterohaemorrhagiae serovar Lai (strain 56601).